The primary structure comprises 159 residues: Phosphopantetheine adenylyltransferase (159 aa).

T10 is a substrate binding site. Residues 10–11 (TF) and H18 contribute to the ATP site. Residues K42, L74, and R88 each coordinate substrate. Residues 89 to 91 (GLR), E99, and 124 to 130 (FAYVSSS) contribute to the ATP site.

This sequence belongs to the bacterial CoaD family. In terms of assembly, homohexamer. It depends on Mg(2+) as a cofactor.

Its subcellular location is the cytoplasm. It catalyses the reaction (R)-4'-phosphopantetheine + ATP + H(+) = 3'-dephospho-CoA + diphosphate. It participates in cofactor biosynthesis; coenzyme A biosynthesis; CoA from (R)-pantothenate: step 4/5. Reversibly transfers an adenylyl group from ATP to 4'-phosphopantetheine, yielding dephospho-CoA (dPCoA) and pyrophosphate. This is Phosphopantetheine adenylyltransferase from Thioalkalivibrio sulfidiphilus (strain HL-EbGR7).